Reading from the N-terminus, the 151-residue chain is Ribosome maturation factor RimP (151 aa).

This sequence belongs to the RimP family.

It localises to the cytoplasm. Required for maturation of 30S ribosomal subunits. The sequence is that of Ribosome maturation factor RimP from Caldanaerobacter subterraneus subsp. tengcongensis (strain DSM 15242 / JCM 11007 / NBRC 100824 / MB4) (Thermoanaerobacter tengcongensis).